Reading from the N-terminus, the 252-residue chain is Mitochondrial intermembrane space import and assembly protein 40 (252 aa).

The transit peptide at 1-31 (MYRTISRSSSGLIRQSTARLTRQLSTTRTTP) directs the protein to the mitochondrion. The Mitochondrial matrix segment spans residues 32–37 (SQYNSK). Residues 38-54 (LLLGVLGTGALAFGYFS) traverse the membrane as a helical; Signal-anchor for type II membrane protein segment. Residues 55 to 252 (QQSSLIQNAS…DKVKPNTKSD (198 aa)) are Mitochondrial intermembrane-facing. Basic and acidic residues predominate over residues 90–123 (RQEKVIKENEQKTKKAEDAKTSSESKANVADKKS). The disordered stretch occupies residues 90–143 (RQEKVIKENEQKTKKAEDAKTSSESKANVADKKSNSQPEGEPEGEGKQEAAFNP). Intrachain disulfides connect C152–C154, C163–C196, and C173–C186. Residues 160 to 204 (HGPCGEEFKEAFSCFVFSETEPKGIDCIKKFENMRSCFKRYPEHY) form the CHCH domain. 2 short sequence motifs (cx9C motif) span residues 163 to 173 (CGEEFKEAFSC) and 186 to 196 (CIKKFENMRSC). The interval 230–252 (EPAIEQIEQGIKEDKVKPNTKSD) is disordered. Positions 239-252 (GIKEDKVKPNTKSD) are enriched in basic and acidic residues.

Monomer. Requires Cu(2+) as cofactor. It depends on Zn(2+) as a cofactor.

The protein resides in the mitochondrion inner membrane. Required for the import and folding of small cysteine-containing proteins (small Tim) in the mitochondrial intermembrane space (IMS). Forms a redox cycle with ERV1 that involves a disulfide relay system. Precursor proteins to be imported into the IMS are translocated in their reduced form into the mitochondria. The oxidized form of MIA40 forms a transient intermolecular disulfide bridge with the reduced precursor protein, resulting in oxidation of the precursor protein that now contains an intramolecular disulfide bond and is able to undergo folding in the IMS. This is Mitochondrial intermembrane space import and assembly protein 40 (MIA40) from Candida albicans (strain SC5314 / ATCC MYA-2876) (Yeast).